A 424-amino-acid polypeptide reads, in one-letter code: Glutamyl-tRNA reductase (424 aa).

Substrate contacts are provided by residues 49–52 (TCNR), S105, 110–112 (EPQ), and Q116. The Nucleophile role is filled by C50. 185-190 (GSGETA) serves as a coordination point for NADP(+).

Belongs to the glutamyl-tRNA reductase family. Homodimer.

The enzyme catalyses (S)-4-amino-5-oxopentanoate + tRNA(Glu) + NADP(+) = L-glutamyl-tRNA(Glu) + NADPH + H(+). The protein operates within porphyrin-containing compound metabolism; protoporphyrin-IX biosynthesis; 5-aminolevulinate from L-glutamyl-tRNA(Glu): step 1/2. Its function is as follows. Catalyzes the NADPH-dependent reduction of glutamyl-tRNA(Glu) to glutamate 1-semialdehyde (GSA). The chain is Glutamyl-tRNA reductase from Legionella pneumophila (strain Corby).